We begin with the raw amino-acid sequence, 503 residues long: Discoidin, CUB and LCCL domain-containing protein 1 (503 aa).

An N-terminal signal peptide occupies residues 1–25 (MGTGAGGPSVLALLFAVCAPLRLQA). Over 26–250 (EELGDGCGHI…FTTPGMNITT (225 aa)) the chain is Extracellular. 4 disulfide bridges follow: cysteine 32–cysteine 59, cysteine 85–cysteine 103, cysteine 149–cysteine 165, and cysteine 169–cysteine 191. In terms of domain architecture, CUB spans 32-141 (CGHIVTSQDS…RGFLLTYASS (110 aa)). N-linked (GlcNAc...) asparagine glycosylation is present at asparagine 55. Residues 143–239 (HPDLITCLER…RHGSLSEKRF (97 aa)) enclose the LCCL domain. An N-linked (GlcNAc...) asparagine glycan is attached at asparagine 247. A helical membrane pass occupies residues 251–271 (VAIPSVIFIALLLTGMGIFAI). The Cytoplasmic segment spans residues 272–503 (CRKRKKKGNP…LNQTAMTALL (232 aa)). Phosphoserine is present on serine 305. Threonine 406 is subject to Phosphothreonine. Residues 410–503 (QSGYRVPGPR…LNQTAMTALL (94 aa)) form a disordered region. Over residues 494 to 503 (LNQTAMTALL) the composition is skewed to polar residues.

It localises to the membrane. This chain is Discoidin, CUB and LCCL domain-containing protein 1 (Dcbld1), found in Mus musculus (Mouse).